The sequence spans 113 residues: UPF0122 protein MGAS10270_Spy1030 (113 aa).

The protein belongs to the UPF0122 family.

Functionally, might take part in the signal recognition particle (SRP) pathway. This is inferred from the conservation of its genetic proximity to ftsY/ffh. May be a regulatory protein. In Streptococcus pyogenes serotype M2 (strain MGAS10270), this protein is UPF0122 protein MGAS10270_Spy1030.